Consider the following 701-residue polypeptide: Transcription factor PDR8 (701 aa).

A disordered region spans residues 1–22 (MDGSHFPMKSTTGEPVSSGKKG). A DNA-binding region (zn(2)-C6 fungal-type) is located at residues 31–59 (CAFCRKRKLKCSQARPMCQQCVIRKLPQC).

It is found in the cytoplasm. It localises to the nucleus. In terms of biological role, up-regulates the transcription of the genes for ATP-binding cassette (ABC) transporters YOR1 and PDR15, for major facilitator superfamily transporter AZR1, for pleiotropic drug resistance SNG1, for alpha-glucosidase YJL216C and for YLL056C. The chain is Transcription factor PDR8 (PDR8) from Saccharomyces cerevisiae (strain ATCC 204508 / S288c) (Baker's yeast).